A 397-amino-acid polypeptide reads, in one-letter code: Tryptophan synthase beta chain (397 aa).

Residue K91 is modified to N6-(pyridoxal phosphate)lysine.

Belongs to the TrpB family. Tetramer of two alpha and two beta chains. It depends on pyridoxal 5'-phosphate as a cofactor.

It catalyses the reaction (1S,2R)-1-C-(indol-3-yl)glycerol 3-phosphate + L-serine = D-glyceraldehyde 3-phosphate + L-tryptophan + H2O. Its pathway is amino-acid biosynthesis; L-tryptophan biosynthesis; L-tryptophan from chorismate: step 5/5. In terms of biological role, the beta subunit is responsible for the synthesis of L-tryptophan from indole and L-serine. The polypeptide is Tryptophan synthase beta chain (Bacillus cereus (strain Q1)).